We begin with the raw amino-acid sequence, 151 residues long: Ubiquitin-conjugating enzyme E2 W (151 aa).

Residue M1 forms a Peptide (Met-Gly) (interchain with G-Cter in ubiquitin) linkage. A UBC core domain is found at 3 to 151 (SMQKRLQKEL…TKWWYHDDTC (149 aa)). The active-site Glycyl thioester intermediate is C91.

Belongs to the ubiquitin-conjugating enzyme family. As to quaternary structure, homodimer. Interacts with FANCL. Interacts with STUB1/CHIP. In terms of processing, ubiquitinated in vitro in the presence of FANCL. Autoubiquitinated at Met-1.

It localises to the nucleus. The catalysed reaction is S-ubiquitinyl-[E1 ubiquitin-activating enzyme]-L-cysteine + [E2 ubiquitin-conjugating enzyme]-L-cysteine = [E1 ubiquitin-activating enzyme]-L-cysteine + S-ubiquitinyl-[E2 ubiquitin-conjugating enzyme]-L-cysteine.. It catalyses the reaction S-ubiquitinyl-[E1 ubiquitin-activating enzyme]-L-cysteine + [acceptor protein]-N-terminal-amino acid = [E1 ubiquitin-activating enzyme]-L-cysteine + N-terminal-ubiquitinyl-[acceptor protein].. The protein operates within protein modification; protein ubiquitination. In terms of biological role, accepts ubiquitin from the E1 complex and catalyzes its covalent attachment to other proteins. Specifically monoubiquitinates the N-terminus of various substrates, including ATXN3, MAPT/TAU, POLR2H/RPB8 and STUB1/CHIP, by recognizing backbone atoms of disordered N-termini. Involved in degradation of misfolded chaperone substrates by mediating monoubiquitination of STUB1/CHIP, leading to recruitment of ATXN3 to monoubiquitinated STUB1/CHIP, and restriction of the length of ubiquitin chain attached to STUB1/CHIP substrates by ATXN3. After UV irradiation, but not after mitomycin-C (MMC) treatment, acts as a specific E2 ubiquitin-conjugating enzyme for the Fanconi anemia complex by associating with E3 ubiquitin-protein ligase FANCL and catalyzing monoubiquitination of FANCD2, a key step in the DNA damage pathway. In vitro catalyzes 'Lys-11'-linked polyubiquitination. UBE2W-catalyzed ubiquitination also occurs in the presence of inactive RING/U-box type E3s, i.e. lacking the active site cysteine residues to form thioester bonds with ubiquitin, or even in the absence of E3, albeit at a slower rate. This chain is Ubiquitin-conjugating enzyme E2 W (UBE2W), found in Bos taurus (Bovine).